A 301-amino-acid chain; its full sequence is 5'-3' exonuclease (301 aa).

Positions 182–264 (GYADLALLRG…RVAADVPLPD (83 aa)) constitute a 5'-3' exonuclease domain.

Functionally, 5'-3' exonuclease acting preferentially on double-stranded DNA. The polypeptide is 5'-3' exonuclease (Streptomyces coelicolor (strain ATCC BAA-471 / A3(2) / M145)).